The following is a 262-amino-acid chain: Co-chaperone protein DjlA (262 aa).

At 1 to 6 (MRFWGK) the chain is on the periplasmic side. The helical transmembrane segment at 7 to 30 (FFGFVIGFMFGRFFGALLGLWLGH) threads the bilayer. Topologically, residues 31 to 262 (LYDKRPGGGA…DRVKSERGMR (232 aa)) are cytoplasmic. One can recognise a J domain in the interval 196 to 262 (DAYHLLGITA…DRVKSERGMR (67 aa)).

Homodimer.

Its subcellular location is the cell inner membrane. In terms of biological role, regulatory DnaK co-chaperone. Direct interaction between DnaK and DjlA is needed for the induction of the wcaABCDE operon, involved in the synthesis of a colanic acid polysaccharide capsule, possibly through activation of the RcsB/RcsC phosphotransfer signaling pathway. The colanic acid capsule may help the bacterium survive conditions outside the host. The polypeptide is Co-chaperone protein DjlA (Shewanella oneidensis (strain ATCC 700550 / JCM 31522 / CIP 106686 / LMG 19005 / NCIMB 14063 / MR-1)).